The sequence spans 317 residues: Putative ribose-phosphate pyrophosphokinase (317 aa).

The segment at 211 to 224 (GRDVIVLDDEIAKG) is binding of phosphoribosylpyrophosphate.

Belongs to the ribose-phosphate pyrophosphokinase family.

It catalyses the reaction D-ribose 5-phosphate + ATP = 5-phospho-alpha-D-ribose 1-diphosphate + AMP + H(+). This Streptomyces coelicolor (strain ATCC BAA-471 / A3(2) / M145) protein is Putative ribose-phosphate pyrophosphokinase.